The sequence spans 296 residues: Protoheme IX farnesyltransferase 2 (296 aa).

9 consecutive transmembrane segments (helical) span residues 7 to 27, 36 to 56, 83 to 103, 108 to 128, 134 to 154, 163 to 183, 207 to 227, 229 to 249, and 265 to 285; these read LLVA…GGYF, PMLL…GCVL, LKAA…LLWW, LTTA…SLWF, YGTL…YCAV, ASLL…IAIF, IHIV…CLGG, AGYG…AIAL, and FAFS…DFQV.

It belongs to the UbiA prenyltransferase family. Protoheme IX farnesyltransferase subfamily.

The protein localises to the cell inner membrane. It carries out the reaction heme b + (2E,6E)-farnesyl diphosphate + H2O = Fe(II)-heme o + diphosphate. The protein operates within porphyrin-containing compound metabolism; heme O biosynthesis; heme O from protoheme: step 1/1. Functionally, converts heme B (protoheme IX) to heme O by substitution of the vinyl group on carbon 2 of heme B porphyrin ring with a hydroxyethyl farnesyl side group. This chain is Protoheme IX farnesyltransferase 2, found in Pseudomonas aeruginosa (strain UCBPP-PA14).